We begin with the raw amino-acid sequence, 123 residues long: Small ribosomal subunit protein uS12 (123 aa).

Aspartate 89 carries the 3-methylthioaspartic acid modification.

Belongs to the universal ribosomal protein uS12 family. Part of the 30S ribosomal subunit. Contacts proteins S8 and S17. May interact with IF1 in the 30S initiation complex.

Functionally, with S4 and S5 plays an important role in translational accuracy. In terms of biological role, interacts with and stabilizes bases of the 16S rRNA that are involved in tRNA selection in the A site and with the mRNA backbone. Located at the interface of the 30S and 50S subunits, it traverses the body of the 30S subunit contacting proteins on the other side and probably holding the rRNA structure together. The combined cluster of proteins S8, S12 and S17 appears to hold together the shoulder and platform of the 30S subunit. The polypeptide is Small ribosomal subunit protein uS12 (Sinorhizobium medicae (strain WSM419) (Ensifer medicae)).